Reading from the N-terminus, the 516-residue chain is GMP synthase [glutamine-hydrolyzing] (516 aa).

Positions 8–198 (KILILDFGSQ…VVNICGCDTL (191 aa)) constitute a Glutamine amidotransferase type-1 domain. Cysteine 84 functions as the Nucleophile in the catalytic mechanism. Active-site residues include histidine 172 and glutamate 174. Positions 199 to 391 (WNIENIIEND…LGLPYNMLYR (193 aa)) constitute a GMPS ATP-PPase domain. 226–232 (SGGVDSS) lines the ATP pocket.

Homodimer.

It carries out the reaction XMP + L-glutamine + ATP + H2O = GMP + L-glutamate + AMP + diphosphate + 2 H(+). Its pathway is purine metabolism; GMP biosynthesis; GMP from XMP (L-Gln route): step 1/1. Catalyzes the synthesis of GMP from XMP. The protein is GMP synthase [glutamine-hydrolyzing] of Francisella tularensis subsp. mediasiatica (strain FSC147).